Here is a 2223-residue protein sequence, read N- to C-terminus: Voltage-dependent T-type calcium channel subunit alpha-1I (2223 aa).

The span at 1-19 (MAESASPPSSSAAAPAAEP) shows a compositional bias: low complexity. Residues 1–46 (MAESASPPSSSAAAPAAEPGVTTEQPGPRSPPSSPPGLEEPLDGAD) form a disordered region. The Cytoplasmic segment spans residues 1 to 78 (MAESASPPSS…RNWCIKMVCN (78 aa)). An I repeat occupies 66–401 (TSPRNWCIKM…LCLVVIATQF (336 aa)). Residues 79–99 (PWFECVSMLVILLNCVTLGMY) form a helical membrane-spanning segment. The Extracellular segment spans residues 100–120 (QPCDDMDCLSDRCKILQVFDD). A helical transmembrane segment spans residues 121–141 (FIFIFFAMEMVLKMVALGIFG). The Cytoplasmic portion of the chain corresponds to 142–148 (KKCYLGD). The chain crosses the membrane as a helical span at residues 149 to 168 (TWNRLDFFIVMAGMVEYSLD). The Extracellular portion of the chain corresponds to 169–173 (LQNIN). A glycan (N-linked (GlcNAc...) asparagine) is linked at asparagine 173. Residues 174–191 (LSAIRTVRVLRPLKAINR) traverse the membrane as a helical segment. At 192–211 (VPSMRILVNLLLDTLPMLGN) the chain is on the cytoplasmic side. Residues 212–232 (VLLLCFFVFFIFGIIGVQLWA) form a helical membrane-spanning segment. The Extracellular segment spans residues 233–377 (GLLRNRCFLE…DAHSFYNFIY (145 aa)). Asparagine 244 and asparagine 311 each carry an N-linked (GlcNAc...) asparagine glycan. A helical transmembrane segment spans residues 378–398 (FILLIIVGSFFMINLCLVVIA). Topologically, residues 399 to 640 (TQFSETKQRE…AKLRGIVDSK (242 aa)) are cytoplasmic. Disordered stretches follow at residues 467-536 (LGPE…ATPH) and 555-616 (CCQH…EQAD). An II repeat occupies 626–865 (WRETRAKLRG…LLVAILVEGF (240 aa)). Residues 641 to 661 (YFNRGIMMAILVNTVSMGIEH) form a helical membrane-spanning segment. Residues 662–676 (HEQPEELTNILEICN) lie on the Extracellular side of the membrane. Residues 677-697 (VVFTSMFALEMILKLAAFGLF) form a helical membrane-spanning segment. The Cytoplasmic portion of the chain corresponds to 698-702 (DYLRN). Residues 703–721 (PYNIFDSIIVIISIWEIVG) traverse the membrane as a helical segment. Residues 722–729 (QADGGLSV) lie on the Extracellular side of the membrane. Residues 730-753 (LRTFRLLRVLKLVRFMPALRRQLV) form a helical membrane-spanning segment. Topologically, residues 754–764 (VLMKTMDNVAT) are cytoplasmic. A helical transmembrane segment spans residues 765-785 (FCMLLMLFIFIFSILGMHIFG). The Extracellular portion of the chain corresponds to 786-841 (CKFSLRTDTGDTVPDRKNFDSLLWAIVTVFQILTQEDWNVVLYNGMASTSPWASLY). The chain crosses the membrane as a helical span at residues 842 to 862 (FVALMTFGNYVLFNLLVAILV). Over 863-1166 (EGFQAEGDAN…NRFRVLCQTI (304 aa)) the chain is Cytoplasmic. Positions 899–936 (GDPKLCPIPMTPNGHLDPSLPLGGHLGPAGAAGPAPRL) are disordered. Positions 912–936 (GHLDPSLPLGGHLGPAGAAGPAPRL) are enriched in low complexity. Serine 1058 is subject to Phosphoserine. The III repeat unit spans residues 1157-1434 (NRFRVLCQTI…MFVGVVVENF (278 aa)). The helical transmembrane segment at 1167–1187 (IAHKLFDYVVLAFIFLNCITI) threads the bilayer. The Extracellular segment spans residues 1188–1209 (ALERPQIEAGSTERIFLTVSNY). The chain crosses the membrane as a helical span at residues 1210-1230 (IFTAIFVGEMTLKVVSLGLYF). Residues 1231–1244 (GEQAYLRSSWNVLD) are Cytoplasmic-facing. The chain crosses the membrane as a helical span at residues 1245 to 1265 (GFLVFVSIIDIVVSLASAGGA). Topologically, residues 1266-1272 (KILGVLR) are extracellular. Residues 1273 to 1294 (VLRLLRTLRPLRVISRAPGLKL) form a helical membrane-spanning segment. Over 1295–1304 (VVETLISSLK) the chain is Cytoplasmic. The helical transmembrane segment at 1305–1325 (PIGNIVLICCAFFIIFGILGV) threads the bilayer. The Extracellular segment spans residues 1326-1410 (QLFKGKFYHC…TNHNPWMLLY (85 aa)). N-linked (GlcNAc...) asparagine glycosylation is found at asparagine 1342 and asparagine 1345. Residues 1411-1431 (FISFLLIVSFFVLNMFVGVVV) traverse the membrane as a helical segment. Residues 1432 to 1485 (ENFHKCRQHQEAEEARRREEKRLRRLEKKRRKAQRLPYYATYCHTRLLIHSMCT) are Cytoplasmic-facing. An IV repeat occupies 1472-1733 (TYCHTRLLIH…VVVAVLMKHL (262 aa)). Residues 1486–1506 (SHYLDIFITFIICLNVVTMSL) form a helical membrane-spanning segment. Over 1507–1522 (EHYNQPTSLETALKYC) the chain is Extracellular. The helical transmembrane segment at 1523–1543 (NYMFTTVFVLEAVLKLVAFGL) threads the bilayer. Over 1544–1556 (RRFFKDRWNQLDL) the chain is Cytoplasmic. Residues 1557-1577 (AIVLLSVMGITLEEIEINAAL) traverse the membrane as a helical segment. The Extracellular portion of the chain corresponds to 1578–1583 (PINPTI). The helical transmembrane segment at 1584–1607 (IRIMRVLRIARVLKLLKMATGMRA) threads the bilayer. Over 1608–1621 (LLDTVVQALPQVGN) the chain is Cytoplasmic. Residues 1622 to 1642 (LGLLFMLLFFIYAALGVELFG) traverse the membrane as a helical segment. Residues 1643-1709 (KLVCNDENPC…SSLQFVSPLY (67 aa)) lie on the Extracellular side of the membrane. The helical transmembrane segment at 1710–1730 (FVSFVLTAQFVLINVVVAVLM) threads the bilayer. Topologically, residues 1731–2223 (KHLDDSNKEA…PGDAASKRKR (493 aa)) are cytoplasmic. Disordered regions lie at residues 1758–1784 (LGPG…GGGD), 1868–1897 (LGDD…PEPM), 1937–1960 (LKHD…LLPM), 2013–2062 (SDTS…LSPA), and 2076–2223 (SLRG…KRKR). The span at 1770–1784 (GAPGRGPGGAGGGGD) shows a compositional bias: gly residues. A compositionally biased stretch (low complexity) spans 2013 to 2028 (SDTSLDASPSSSAGSL). 2 stretches are compositionally biased toward polar residues: residues 2029–2040 (QTTLEDSLTLSD) and 2087–2096 (HSSGGSTSPG). The span at 2098 to 2111 (THHDSMDPSDEEGR) shows a compositional bias: basic and acidic residues. Positions 2126–2136 (TLSSLSLTSLF) are enriched in low complexity. Positions 2137 to 2146 (CPPPPPPAPG) are enriched in pro residues. A compositionally biased stretch (low complexity) spans 2160 to 2176 (AAPGRPHAAALAHGLAR).

Belongs to the calcium channel alpha-1 subunit (TC 1.A.1.11) family. CACNA1I subfamily. In terms of assembly, interacts with CATSPER1 and CATSPER2, leading to suppress T-type calcium channel activity. In terms of processing, in response to raising of intracellular calcium, the T-type channels are activated by CaM-kinase II. As to expression, brain specific.

The protein resides in the membrane. It carries out the reaction Ca(2+)(in) = Ca(2+)(out). Functionally, voltage-sensitive calcium channels (VSCC) mediate the entry of calcium ions into excitable cells and are also involved in a variety of calcium-dependent processes, including muscle contraction, hormone or neurotransmitter release, gene expression, cell motility, cell division and cell death. This channel gives rise to T-type calcium currents. T-type calcium channels belong to the 'low-voltage activated (LVA)' group and are strongly blocked by nickel and mibefradil. A particularity of this type of channels is an opening at quite negative potentials, and a voltage-dependent inactivation. T-type channels serve pacemaking functions in both central neurons and cardiac nodal cells and support calcium signaling in secretory cells and vascular smooth muscle. They may also be involved in the modulation of firing patterns of neurons which is important for information processing as well as in cell growth processes. Gates in voltage ranges similar to, but higher than alpha 1G or alpha 1H. Its function is as follows. Voltage-sensitive calcium channels (VSCC) mediate the entry of calcium ions into excitable cells and are also involved in a variety of calcium-dependent processes, including muscle contraction, hormone or neurotransmitter release, gene expression, cell motility, cell division and cell death. This channel gives rise to T-type calcium currents. The sequence is that of Voltage-dependent T-type calcium channel subunit alpha-1I (CACNA1I) from Homo sapiens (Human).